The chain runs to 63 residues: Large ribosomal subunit protein uL29 (63 aa).

It belongs to the universal ribosomal protein uL29 family.

In Hahella chejuensis (strain KCTC 2396), this protein is Large ribosomal subunit protein uL29.